Here is a 380-residue protein sequence, read N- to C-terminus: Chorismate synthase (380 aa).

Arg47 lines the NADP(+) pocket. Residues 124–126, Gly288, 303–307, and Arg329 each bind FMN; these read RSS and KPTST.

It belongs to the chorismate synthase family. As to quaternary structure, homotetramer. FMNH2 is required as a cofactor.

The catalysed reaction is 5-O-(1-carboxyvinyl)-3-phosphoshikimate = chorismate + phosphate. Its pathway is metabolic intermediate biosynthesis; chorismate biosynthesis; chorismate from D-erythrose 4-phosphate and phosphoenolpyruvate: step 7/7. Catalyzes the anti-1,4-elimination of the C-3 phosphate and the C-6 proR hydrogen from 5-enolpyruvylshikimate-3-phosphate (EPSP) to yield chorismate, which is the branch point compound that serves as the starting substrate for the three terminal pathways of aromatic amino acid biosynthesis. This reaction introduces a second double bond into the aromatic ring system. The chain is Chorismate synthase from Leptospira borgpetersenii serovar Hardjo-bovis (strain JB197).